The primary structure comprises 101 residues: Small ribosomal subunit protein uS14 (101 aa).

It belongs to the universal ribosomal protein uS14 family. Part of the 30S ribosomal subunit. Contacts proteins S3 and S10.

Binds 16S rRNA, required for the assembly of 30S particles and may also be responsible for determining the conformation of the 16S rRNA at the A site. In Orientia tsutsugamushi (strain Ikeda) (Rickettsia tsutsugamushi), this protein is Small ribosomal subunit protein uS14.